The following is a 464-amino-acid chain: Chromosomal replication initiator protein DnaA (464 aa).

Residues 1 to 90 (MNNDNTEVLE…KYWQDEDQSI (90 aa)) are domain I, interacts with DnaA modulators. The tract at residues 90-126 (ICSVDICVVSNQDPNLLVDIKDRVDRGIKGNCDNVSS) is domain II. The domain III, AAA+ region stretch occupies residues 127-345 (PLDPRFTFDN…GALNKVVAHS (219 aa)). ATP contacts are provided by G173, G175, K176, and T177. The interval 346 to 464 (SLVGCSITLD…DINLLNRMLR (119 aa)) is domain IV, binds dsDNA.

It belongs to the DnaA family. Oligomerizes as a right-handed, spiral filament on DNA at oriC.

Its subcellular location is the cytoplasm. In terms of biological role, plays an essential role in the initiation and regulation of chromosomal replication. ATP-DnaA binds to the origin of replication (oriC) to initiate formation of the DNA replication initiation complex once per cell cycle. Binds the DnaA box (a 9 base pair repeat at the origin) and separates the double-stranded (ds)DNA. Forms a right-handed helical filament on oriC DNA; dsDNA binds to the exterior of the filament while single-stranded (ss)DNA is stabiized in the filament's interior. The ATP-DnaA-oriC complex binds and stabilizes one strand of the AT-rich DNA unwinding element (DUE), permitting loading of DNA polymerase. After initiation quickly degrades to an ADP-DnaA complex that is not apt for DNA replication. Binds acidic phospholipids. The protein is Chromosomal replication initiator protein DnaA of Ehrlichia ruminantium (strain Gardel).